Here is a 416-residue protein sequence, read N- to C-terminus: Serine--tRNA ligase (416 aa).

T232 to E234 is an L-serine binding site. ATP is bound at residue R263 to E265. E286 serves as a coordination point for L-serine. E350–S353 contacts ATP. S384 is a binding site for L-serine.

Belongs to the class-II aminoacyl-tRNA synthetase family. Type-1 seryl-tRNA synthetase subfamily. In terms of assembly, homodimer. The tRNA molecule binds across the dimer.

The protein localises to the cytoplasm. It catalyses the reaction tRNA(Ser) + L-serine + ATP = L-seryl-tRNA(Ser) + AMP + diphosphate + H(+). The catalysed reaction is tRNA(Sec) + L-serine + ATP = L-seryl-tRNA(Sec) + AMP + diphosphate + H(+). It functions in the pathway aminoacyl-tRNA biosynthesis; selenocysteinyl-tRNA(Sec) biosynthesis; L-seryl-tRNA(Sec) from L-serine and tRNA(Sec): step 1/1. Catalyzes the attachment of serine to tRNA(Ser). Is also able to aminoacylate tRNA(Sec) with serine, to form the misacylated tRNA L-seryl-tRNA(Sec), which will be further converted into selenocysteinyl-tRNA(Sec). This is Serine--tRNA ligase from Nautilia profundicola (strain ATCC BAA-1463 / DSM 18972 / AmH).